The following is a 245-amino-acid chain: 1-(5-phosphoribosyl)-5-[(5-phosphoribosylamino)methylideneamino] imidazole-4-carboxamide isomerase (245 aa).

Asp-7 functions as the Proton acceptor in the catalytic mechanism. The active-site Proton donor is Asp-129.

It belongs to the HisA/HisF family.

Its subcellular location is the cytoplasm. The catalysed reaction is 1-(5-phospho-beta-D-ribosyl)-5-[(5-phospho-beta-D-ribosylamino)methylideneamino]imidazole-4-carboxamide = 5-[(5-phospho-1-deoxy-D-ribulos-1-ylimino)methylamino]-1-(5-phospho-beta-D-ribosyl)imidazole-4-carboxamide. It functions in the pathway amino-acid biosynthesis; L-histidine biosynthesis; L-histidine from 5-phospho-alpha-D-ribose 1-diphosphate: step 4/9. This chain is 1-(5-phosphoribosyl)-5-[(5-phosphoribosylamino)methylideneamino] imidazole-4-carboxamide isomerase, found in Shewanella baltica (strain OS223).